Consider the following 101-residue polypeptide: NAD(P)H-quinone oxidoreductase subunit 4L, chloroplastic (101 aa).

The next 3 helical transmembrane spans lie at 2–22 (MLEH…YGLI), 32–52 (MCLE…SDLF), and 61–81 (IFSI…PAIV).

Belongs to the complex I subunit 4L family. In terms of assembly, NDH is composed of at least 16 different subunits, 5 of which are encoded in the nucleus.

It is found in the plastid. The protein resides in the chloroplast thylakoid membrane. The catalysed reaction is a plastoquinone + NADH + (n+1) H(+)(in) = a plastoquinol + NAD(+) + n H(+)(out). It catalyses the reaction a plastoquinone + NADPH + (n+1) H(+)(in) = a plastoquinol + NADP(+) + n H(+)(out). Functionally, NDH shuttles electrons from NAD(P)H:plastoquinone, via FMN and iron-sulfur (Fe-S) centers, to quinones in the photosynthetic chain and possibly in a chloroplast respiratory chain. The immediate electron acceptor for the enzyme in this species is believed to be plastoquinone. Couples the redox reaction to proton translocation, and thus conserves the redox energy in a proton gradient. In Ceratophyllum demersum (Rigid hornwort), this protein is NAD(P)H-quinone oxidoreductase subunit 4L, chloroplastic.